Reading from the N-terminus, the 400-residue chain is Eukaryotic translation initiation factor 3 subunit M (400 aa).

Residues 180–354 (LIAKIYSALV…QSFAVHRAQK (175 aa)) enclose the PCI domain.

It belongs to the eIF-3 subunit M family. In terms of assembly, component of the eukaryotic translation initiation factor 3 (eIF-3) complex.

The protein localises to the cytoplasm. Its function is as follows. Component of the eukaryotic translation initiation factor 3 (eIF-3) complex, which is involved in protein synthesis of a specialized repertoire of mRNAs and, together with other initiation factors, stimulates binding of mRNA and methionyl-tRNAi to the 40S ribosome. The eIF-3 complex specifically targets and initiates translation of a subset of mRNAs involved in cell proliferation. This is Eukaryotic translation initiation factor 3 subunit M from Yarrowia lipolytica (strain CLIB 122 / E 150) (Yeast).